The chain runs to 313 residues: MAAPREPEVIRDKAAMRAWSRRRRAEGKTVAVVPTMGYLHQGHLSLISAAAAAASADPVAIVVTIYVNPSQFAPSEDLATYPSDFAGDLRKLASTGVVDAVFNPPDLYVRGAGRRGAASGGAISCLEEAAGDGHETWVRVERLEKGMCGASRPVFFRGVATIVSKLFNIIEPDVAVFGKKDYQQWRVICRMVRDLDFAIEIIGSEIVREADGLAMSSRNVHLSREEREKALSISRSLVDARTGALKGNTDCKQIKNKIVQTLTETGGQVDYVEIVEQESLVPVEQIDGPVVICVAAWFGKVRLIDNIEIDTRS.

Residue 36–43 coordinates ATP; it reads MGYLHQGH. H43 (proton donor) is an active-site residue. Residue Q71 coordinates (R)-pantoate. Residue Q71 coordinates beta-alanine. 178–181 contacts ATP; that stretch reads GKKD. A (R)-pantoate-binding site is contributed by Q184. Residue 215 to 218 participates in ATP binding; that stretch reads MSSR.

It belongs to the pantothenate synthetase family. In terms of assembly, homodimer.

It is found in the cytoplasm. It localises to the cytosol. The catalysed reaction is (R)-pantoate + beta-alanine + ATP = (R)-pantothenate + AMP + diphosphate + H(+). It functions in the pathway cofactor biosynthesis; (R)-pantothenate biosynthesis; (R)-pantothenate from (R)-pantoate and beta-alanine: step 1/1. In terms of biological role, catalyzes the condensation of pantoate with beta-alanine to form pantothenate. Essential for panthotenate biosynthesis. In Oryza sativa subsp. japonica (Rice), this protein is Pantoate--beta-alanine ligase (PANC).